Reading from the N-terminus, the 278-residue chain is UPF0276 protein Sama_1305 (278 aa).

It belongs to the UPF0276 family.

This chain is UPF0276 protein Sama_1305, found in Shewanella amazonensis (strain ATCC BAA-1098 / SB2B).